A 143-amino-acid chain; its full sequence is MLMGEYQHNIDAKGRLIVPSKFREELGEKFVVTRGMDGCLFGYPLNEWSQLEAKLQEMPLAKKDARTFVRFFYSAATECEIDKQGRINIPANLRTHASLEKGCVVIGVSNRIEIWSDERWHAFSDEAEENFDELAETMIDFGF.

SpoVT-AbrB domains lie at 5–47 (EYQH…PLNE) and 76–119 (ATEC…SDER).

Belongs to the MraZ family. As to quaternary structure, forms oligomers.

It is found in the cytoplasm. Its subcellular location is the nucleoid. This chain is Transcriptional regulator MraZ, found in Enterococcus faecalis (strain ATCC 700802 / V583).